The following is a 304-amino-acid chain: PTB domain-containing engulfment adapter protein 1 (304 aa).

A Phosphothreonine modification is found at Thr-16. Residues 21-176 (SKHFIPYNAK…AGLQKRIQDL (156 aa)) form the PID domain. A coiled-coil region spans residues 158-202 (KDVETRKQIAGLQKRIQDLETENMELKNKVQDLENQLRITQVSAP). Residue Ser-223 is modified to Phosphoserine. Residues 223 to 246 (SPISHQSSMPTRNGTQPPPVPSRS) are disordered. Positions 225 to 237 (ISHQSSMPTRNGT) are enriched in polar residues.

It belongs to the ced-6 family. As to quaternary structure, homodimer. Interacts with clathrin. Interacts with GDP-bound ARF6, but not with GTP-bound ARF6. Part of a complex composed of GULP1, ACAP1 and ARF6. Interacts with ACAP1, LRP1, MEGF10 and STAB2. In terms of tissue distribution, widely expressed. Detected in macrophages, pancreas, kidney, skeletal muscle, heart, colon, intestine, lung, placenta and ovary.

It localises to the cytoplasm. Its function is as follows. May function as an adapter protein. Required for efficient phagocytosis of apoptotic cells. Modulates cellular glycosphingolipid and cholesterol transport. May play a role in the internalization and endosomal trafficking of various LRP1 ligands, such as PSAP. Increases cellular levels of GTP-bound ARF6. In Homo sapiens (Human), this protein is PTB domain-containing engulfment adapter protein 1 (GULP1).